Consider the following 387-residue polypeptide: Chaperone protein DnaJ (387 aa).

In terms of domain architecture, J spans 5–70 (DYYEVLGVAK…QKRAAYDRFG (66 aa)). The CR-type zinc finger occupies 140–218 (GKTETIRLPT…CGGAGRVTRE (79 aa)). Residues Cys153, Cys156, Cys170, Cys173, Cys192, Cys195, Cys206, and Cys209 each coordinate Zn(2+). CXXCXGXG motif repeat units follow at residues 153–160 (CEVCAGSG), 170–177 (CPTCGGYG), 192–199 (CPNCQGRG), and 206–213 (CAACGGAG).

This sequence belongs to the DnaJ family. As to quaternary structure, homodimer. Requires Zn(2+) as cofactor.

It is found in the cytoplasm. Participates actively in the response to hyperosmotic and heat shock by preventing the aggregation of stress-denatured proteins and by disaggregating proteins, also in an autonomous, DnaK-independent fashion. Unfolded proteins bind initially to DnaJ; upon interaction with the DnaJ-bound protein, DnaK hydrolyzes its bound ATP, resulting in the formation of a stable complex. GrpE releases ADP from DnaK; ATP binding to DnaK triggers the release of the substrate protein, thus completing the reaction cycle. Several rounds of ATP-dependent interactions between DnaJ, DnaK and GrpE are required for fully efficient folding. Also involved, together with DnaK and GrpE, in the DNA replication of plasmids through activation of initiation proteins. In Methylobacterium sp. (strain 4-46), this protein is Chaperone protein DnaJ.